Consider the following 259-residue polypeptide: Sugar fermentation stimulation protein homolog (259 aa).

This sequence belongs to the SfsA family.

The chain is Sugar fermentation stimulation protein homolog from Chloroflexus aurantiacus (strain ATCC 29364 / DSM 637 / Y-400-fl).